We begin with the raw amino-acid sequence, 165 residues long: Endoribonuclease YbeY (165 aa).

Residues histidine 131, histidine 135, and histidine 141 each coordinate Zn(2+).

Belongs to the endoribonuclease YbeY family. The cofactor is Zn(2+).

The protein resides in the cytoplasm. Its function is as follows. Single strand-specific metallo-endoribonuclease involved in late-stage 70S ribosome quality control and in maturation of the 3' terminus of the 16S rRNA. This Agathobacter rectalis (strain ATCC 33656 / DSM 3377 / JCM 17463 / KCTC 5835 / VPI 0990) (Eubacterium rectale) protein is Endoribonuclease YbeY.